We begin with the raw amino-acid sequence, 25 residues long: Small ribosomal subunit protein eS32B (25 aa).

Positions 1-25 are disordered; that stretch reads MRAKWRKKRTRRLKRKRRKVRARSK.

Belongs to the eukaryotic ribosomal protein eS32 family. As to quaternary structure, component of the small ribosomal subunit (SSU). Mature yeast ribosomes consist of a small (40S) and a large (60S) subunit. The 40S small subunit contains 1 molecule of ribosomal RNA (18S rRNA) and 33 different proteins (encoded by 57 genes). The large 60S subunit contains 3 rRNA molecules (25S, 5.8S and 5S rRNA) and 46 different proteins (encoded by 81 genes).

The protein resides in the cytoplasm. In terms of biological role, component of the ribosome, a large ribonucleoprotein complex responsible for the synthesis of proteins in the cell. The small ribosomal subunit (SSU) binds messenger RNAs (mRNAs) and translates the encoded message by selecting cognate aminoacyl-transfer RNA (tRNA) molecules. The large subunit (LSU) contains the ribosomal catalytic site termed the peptidyl transferase center (PTC), which catalyzes the formation of peptide bonds, thereby polymerizing the amino acids delivered by tRNAs into a polypeptide chain. The nascent polypeptides leave the ribosome through a tunnel in the LSU and interact with protein factors that function in enzymatic processing, targeting, and the membrane insertion of nascent chains at the exit of the ribosomal tunnel. The protein is Small ribosomal subunit protein eS32B of Saccharomyces cerevisiae (strain ATCC 204508 / S288c) (Baker's yeast).